A 72-amino-acid chain; its full sequence is Alpha-elapitoxin-Dpp2d (72 aa).

5 disulfides stabilise this stretch: Cys-3/Cys-21, Cys-14/Cys-42, Cys-27/Cys-31, Cys-46/Cys-57, and Cys-58/Cys-63. Arg-72 is modified (arginine amide).

Belongs to the three-finger toxin family. Long-chain subfamily. Type II alpha-neurotoxin sub-subfamily. As to quaternary structure, monomer (predominant). In terms of processing, amidation does not significantly affect toxin selectivity, since the activity profile and binding data are reminiscent of classical long-chain 3-finger toxins with a free carboxyl termini. Expressed by the venom gland.

It is found in the secreted. In terms of biological role, binds with high affinity to muscular (IC(50)=114 nM) and neuronal (alpha-7/CHRNA7) (IC(50)=58 nM) nicotinic acetylcholine receptor (nAChR) and inhibits acetylcholine from binding to the receptor, thereby impairing neuromuscular and neuronal transmission. Competitive radioligand binding assays also demonstrate that this toxin competes with epibatidine binding to the Lymnaea stagnalis acetylcholine-binding protein (Ls-AChBP) (IC(50)=4.9 nM). This Dendroaspis polylepis polylepis (Black mamba) protein is Alpha-elapitoxin-Dpp2d.